A 461-amino-acid chain; its full sequence is MFDIALRSGPARGGVSHRVRTCDTVDGGYQCFPRLSHRWGQYSPYFSLANTGLPSEVPEKCELTFVQVLSRHGARYPTASKSKKYKSLIQAIQANATAYNGQSVFLRAYNYTLGSEDLTSFGEHQMINSGIKFYQRYAALTRDHVPFIRSSDSSRVVASGQLFIQGYEQSKAQDCDADHSQDHAAINVLISEAPGANNTLNHNTCAAFEADKLGDQVSAKYTALIAPPMAQRLHHDLPGVTLTDDQVIYLMDMCAYDTVATTPGATSLSPFCALFTDTEWSQYNYLQSLGKYYGYGAGNPLGPTQGVGFINELIARMTHSPVHDHTTSNRTLDAPGADSFPTNRTLYADFTHDNGMIPIFFALGLYNGSDPLPHDRIVPATQADGYSAAWAVPFAARAYIEMMQCGRETEPLVRVLINDRVAPLKGCNVDQLGRCKRSDFVNALSFAQDGGDWAKCGVSSK.

Residues cysteine 22 and cysteine 31 are joined by a disulfide bond. 1D-myo-inositol hexakisphosphate is bound by residues glutamine 41, tyrosine 42, arginine 71, histidine 72, arginine 75, and threonine 78. 4 disulfides stabilise this stretch: cysteine 61/cysteine 405, cysteine 205/cysteine 456, cysteine 254/cysteine 272, and cysteine 427/cysteine 435. Histidine 72 functions as the Nucleophile in the catalytic mechanism. 2 N-linked (GlcNAc...) asparagine glycosylation sites follow: asparagine 95 and asparagine 110. Arginine 155 provides a ligand contact to 1D-myo-inositol hexakisphosphate. Residue asparagine 197 is glycosylated (N-linked (GlcNAc...) asparagine). 1D-myo-inositol hexakisphosphate is bound at residue lysine 291. 2 N-linked (GlcNAc...) asparagine glycosylation sites follow: asparagine 329 and asparagine 343. Residues histidine 352 and aspartate 353 each coordinate 1D-myo-inositol hexakisphosphate. Residue asparagine 367 is glycosylated (N-linked (GlcNAc...) asparagine).

Belongs to the histidine acid phosphatase family. As to quaternary structure, monomer. In terms of processing, glycosylated.

The protein localises to the secreted. It catalyses the reaction 1D-myo-inositol hexakisphosphate + H2O = 1D-myo-inositol 1,2,4,5,6-pentakisphosphate + phosphate. The enzyme catalyses 1D-myo-inositol 1,2,4,5,6-pentakisphosphate + H2O = 1D-myo-inositol 1,2,5,6-tetrakisphosphate + phosphate. It carries out the reaction 1D-myo-inositol 1,2,5,6-tetrakisphosphate + H2O = 1D-myo-inositol 1,2,6-trisphosphate + phosphate. The catalysed reaction is 1D-myo-inositol 1,2,6-trisphosphate + H2O = 1D-myo-inositol 1,2-bisphosphate + phosphate. It catalyses the reaction 1D-myo-inositol 1,2-bisphosphate + H2O = 1D-myo-inositol 2-phosphate + phosphate. In terms of biological role, catalyzes the phosphate monoester hydrolysis of phytic acid (myo-inositol hexakisphosphate), which results in the stepwise formation of myo-inositol pentakis-, tetrakis-, tris-, bis-, and monophosphates, as well as the liberation of inorganic phosphate. Myo-inositol 2-monophosphate is the end product. In Penicillium oxalicum, this protein is Phytase A.